The sequence spans 660 residues: E3 ubiquitin-protein ligase ORTHRUS 3 (660 aa).

The segment at 12–63 adopts a PHD-type zinc-finger fold; it reads EGVCMRCKSMPPPEESLTCGTCVTPWHVSCLLSPPETLSATLQWLCPDCSGE. Positions 107-129 are disordered; it reads QLLSGKGVVDEDDEEEKKKTSKG. Residues 141-197 form an RING-type 1 zinc finger; sequence CSFCMQSLQKPVSVRVLFALALMLVWFLESTPCGHNACLKCFLKWMGQGHRSCGTCR. Positions 285-434 constitute a YDG domain; the sequence is VRNQGLLVGE…CRFLFVRCDN (150 aa). The RING-type 2 zinc-finger motif lies at 528 to 585; sequence CQICQKVMTNPVTTPCAHNFCKACLESKFAGTALVRERGSGGRKLRSQKSVMKCPCCP. A coiled-coil region spans residues 593–622; sequence QNPQVNREVAEVIEKLKKQEEEENAKSLDE. Composition is skewed to basic and acidic residues over residues 610–621 and 637–646; these read KQEEEENAKSLD and QPKKRIKLDT. A disordered region spans residues 610-660; that stretch reads KQEEEENAKSLDEGQCSGTSHEEEDDEQPKKRIKLDTDAEVSATVVESDMK.

It is found in the nucleus. It catalyses the reaction S-ubiquitinyl-[E2 ubiquitin-conjugating enzyme]-L-cysteine + [acceptor protein]-L-lysine = [E2 ubiquitin-conjugating enzyme]-L-cysteine + N(6)-ubiquitinyl-[acceptor protein]-L-lysine.. The protein operates within protein modification; protein ubiquitination. In terms of biological role, E3 ubiquitin-protein ligase. May participate in CpG methylation-dependent transcriptional regulation. This chain is E3 ubiquitin-protein ligase ORTHRUS 3 (ORTH3), found in Arabidopsis thaliana (Mouse-ear cress).